The primary structure comprises 480 residues: Cyclin L homolog cyl-1 (480 aa).

The interval 25 to 58 (PKEQNGNVEPKKEEDEKFESTYKQNENTQITPSS) is disordered. Positions 33 to 44 (EPKKEEDEKFES) are enriched in basic and acidic residues. The segment covering 45–58 (TYKQNENTQITPSS) has biased composition (polar residues). Residues 91 to 230 (PSLVDGLSKE…RRILATLGFV (140 aa)) form the Cyclin N-terminal domain. Positions 368–480 (KMAPDGEKST…ESSTPPRSRR (113 aa)) are disordered. 2 stretches are compositionally biased toward basic and acidic residues: residues 384 to 409 (KDSRKVSPDRKNGTKDRGEADRGKKE) and 418 to 442 (NDRDGRGDRRDRDKDRGDRRKDEKK). Over residues 443 to 453 (DRRKRTRSRSR) the composition is skewed to basic residues. Residues 454–472 (DRKDKNRNRDVGKRYRKES) show a composition bias toward basic and acidic residues.

Belongs to the cyclin family.

Its function is as follows. Involved in pre-mRNA splicing. Functions in association with cyclin-dependent kinases (CDKs). Involved in induction of expression of heat shock protein hsp-16.2 in response to heat shock. Plays a role in male tail development, perhaps acting together with cell cycle regulators cdc-25.2, cdk-1, cyb-3, and cyd-1. In Caenorhabditis elegans, this protein is Cyclin L homolog cyl-1.